We begin with the raw amino-acid sequence, 400 residues long: Deoxyguanosinetriphosphate triphosphohydrolase-like protein (400 aa).

The HD domain occupies 76 to 204 (RLTHTLEVAQ…VNIADPLAYC (129 aa)).

This sequence belongs to the dGTPase family. Type 2 subfamily.

The sequence is that of Deoxyguanosinetriphosphate triphosphohydrolase-like protein from Syntrophus aciditrophicus (strain SB).